The chain runs to 523 residues: Coatomer subunit delta-2 (523 aa).

Residues D218–L243 form a disordered region. The MHD domain occupies S282 to V523.

The protein belongs to the adaptor complexes medium subunit family. Delta-COP subfamily. As to quaternary structure, oligomeric complex that consists of at least the alpha, beta, beta', gamma, delta, epsilon and zeta subunits.

The protein localises to the cytoplasm. It localises to the golgi apparatus membrane. Its subcellular location is the cytoplasmic vesicle. It is found in the COPI-coated vesicle membrane. Its function is as follows. The coatomer is a cytosolic protein complex that binds to dilysine motifs and reversibly associates with Golgi non-clathrin-coated vesicles, which further mediate biosynthetic protein transport from the ER, via the Golgi up to the trans Golgi network. Coatomer complex is required for budding from Golgi membranes, and is essential for the retrograde Golgi-to-ER transport of dilysine-tagged proteins. This chain is Coatomer subunit delta-2, found in Oryza sativa subsp. japonica (Rice).